The primary structure comprises 227 residues: 7-cyano-7-deazaguanine synthase (227 aa).

Residue 7–17 (VSGGMDSLVAT) coordinates ATP. C187, C195, C198, and C201 together coordinate Zn(2+).

Belongs to the QueC family. Zn(2+) serves as cofactor.

It catalyses the reaction 7-carboxy-7-deazaguanine + NH4(+) + ATP = 7-cyano-7-deazaguanine + ADP + phosphate + H2O + H(+). The protein operates within purine metabolism; 7-cyano-7-deazaguanine biosynthesis. Its function is as follows. Catalyzes the ATP-dependent conversion of 7-carboxy-7-deazaguanine (CDG) to 7-cyano-7-deazaguanine (preQ(0)). This is 7-cyano-7-deazaguanine synthase from Chlorobaculum parvum (strain DSM 263 / NCIMB 8327) (Chlorobium vibrioforme subsp. thiosulfatophilum).